A 98-amino-acid chain; its full sequence is NADH-ubiquinone oxidoreductase chain 4L (98 aa).

Transmembrane regions (helical) follow at residues 2-22 (TLTT…TLIF), 29-49 (TLLC…ITAL), and 61-81 (ITTL…LTMV).

Belongs to the complex I subunit 4L family. In terms of assembly, core subunit of respiratory chain NADH dehydrogenase (Complex I) which is composed of 45 different subunits.

The protein resides in the mitochondrion inner membrane. The enzyme catalyses a ubiquinone + NADH + 5 H(+)(in) = a ubiquinol + NAD(+) + 4 H(+)(out). In terms of biological role, core subunit of the mitochondrial membrane respiratory chain NADH dehydrogenase (Complex I) which catalyzes electron transfer from NADH through the respiratory chain, using ubiquinone as an electron acceptor. Part of the enzyme membrane arm which is embedded in the lipid bilayer and involved in proton translocation. This is NADH-ubiquinone oxidoreductase chain 4L (MT-ND4L) from Oxymycterus rufus (Red hocicudo).